Consider the following 94-residue polypeptide: Small ribosomal subunit protein uS19m (94 aa).

It belongs to the universal ribosomal protein uS19 family.

It localises to the mitochondrion. The protein is Small ribosomal subunit protein uS19m (RPS19) of Petunia hybrida (Petunia).